Reading from the N-terminus, the 142-residue chain is Large ribosomal subunit protein uL13 (142 aa).

This sequence belongs to the universal ribosomal protein uL13 family. Part of the 50S ribosomal subunit.

In terms of biological role, this protein is one of the early assembly proteins of the 50S ribosomal subunit, although it is not seen to bind rRNA by itself. It is important during the early stages of 50S assembly. This Stenotrophomonas maltophilia (strain K279a) protein is Large ribosomal subunit protein uL13.